Reading from the N-terminus, the 333-residue chain is GTPase Obg (333 aa).

The 159-residue stretch at Met-1–Leu-159 folds into the Obg domain. Positions Lys-63–Asp-85 are disordered. A compositionally biased stretch (basic and acidic residues) spans Gly-75–Asp-84. The 170-residue stretch at Ala-160–Cys-329 folds into the OBG-type G domain. GTP contacts are provided by residues Gly-166–Ser-173, Phe-191–Ser-195, Asp-213–Gly-216, Asn-283–Asp-286, and Ser-310–Ala-312. Mg(2+)-binding residues include Ser-173 and Thr-193.

It belongs to the TRAFAC class OBG-HflX-like GTPase superfamily. OBG GTPase family. In terms of assembly, monomer. It depends on Mg(2+) as a cofactor.

Its subcellular location is the cytoplasm. An essential GTPase which binds GTP, GDP and possibly (p)ppGpp with moderate affinity, with high nucleotide exchange rates and a fairly low GTP hydrolysis rate. Plays a role in control of the cell cycle, stress response, ribosome biogenesis and in those bacteria that undergo differentiation, in morphogenesis control. This chain is GTPase Obg, found in Desulfosudis oleivorans (strain DSM 6200 / JCM 39069 / Hxd3) (Desulfococcus oleovorans).